The following is a 200-amino-acid chain: MASFDGQGFMMVDNSWVQTKAIDVESTTDISPYLSKILEDSVWNGNRSIVFDVYWDVKSVSTKSEWRLCSVKFSTKNFCLFLRLPNPFCDNLKDLYRFFASKFVTFVGVQIQEDLALLKENHGIVIRSSLEIGKLAAKARGTPIVEFLGTRELAHKILWYDMSRLDSIQSKWDEASSNDRLEAAAIEGWLIFNVYDQLQQ.

Oligomerization stretches follow at residues 35–66, 102–127, and 166–173; these read SKILEDSVWNGNRSIVFDVYWDVKSVSTKSEW, KFVTFVGVQIQEDLALLKENHGIVIR, and DSIQSKWD.

This sequence belongs to the RICE family. In terms of assembly, homohexamer with DnaQ-like exonuclease fold in a ring-shaped structure with a central cavity. Component of AGO1 and AGO10-centered RNA-induced silencing complexes (RISC). Interacts with and acts as a cofactor of AGO1 and AGO10. Ubiquitously expressed throughout development in germinating seeds, cotyledons, leaves and roots of young seedlings and adult plants, stems and inflorescence.

The protein localises to the cytoplasm. The catalysed reaction is Exonucleolytic cleavage in the 3'- to 5'-direction to yield nucleoside 5'-phosphates.. In terms of biological role, 3'-to-5' exoribonuclease (RNase) specifically targeting single-stranded RNAs. Triggers miRNA accumulation in RNA-induced silencing complex (RISC), composed of miRNAs and AGO proteins, by degrading uridylated cleavage fragments. Required during plant growth and development. The protein is Protein RISC-INTERACTING CLEARING 3'-5' EXORIBONUCLEASE 1 of Arabidopsis thaliana (Mouse-ear cress).